Reading from the N-terminus, the 214-residue chain is Rhodanese-like domain-containing protein 10 (214 aa).

The Rhodanese domain occupies 58–182 (ASEGYILLDV…VSEGDFPEIE (125 aa)). Cys142 serves as the catalytic Cysteine persulfide intermediate. A helical transmembrane segment spans residues 190 to 206 (ATIGGVSFYLLKLLVLL).

Its subcellular location is the membrane. This chain is Rhodanese-like domain-containing protein 10 (STR10), found in Arabidopsis thaliana (Mouse-ear cress).